The following is a 76-amino-acid chain: Large ribosomal subunit protein bL31 (76 aa).

Belongs to the bacterial ribosomal protein bL31 family. Type A subfamily. Part of the 50S ribosomal subunit.

Binds the 23S rRNA. The polypeptide is Large ribosomal subunit protein bL31 (rpmE) (Pelagibacter ubique (strain HTCC1062)).